An 867-amino-acid polypeptide reads, in one-letter code: MATFISVPLKKTSEVDLVKPLSKYIHNTYPSGEDQTEYCRAVDELNKLRKSAVGRPLDKHETSLETVMRYYDQLCSVEPKFPFTESQLCLTFTWKDAFDKGSIFGGSVKLALPSLGYEKTCVLFNIGALASQIASEQNLDNDEALKAASKFYQLASGAFSHIKDTVLSSLNRDPTVDISPDTVGTLSLIMLAQAQEVFFLKATRDKMKDAVIAKLANQAADYYGDAFKQCQYKDTLSKEVFPILAAKHCIMQAHAEYHQSVLAKQQKKFGEEIGRLQHASDLVKTVSSRYDEYVNVKDLADKINRALTAAKKDNDFIYHDRVPDLKDLDPVGKASLVKSTPVNVPLSQKYTDLFEKMVPLAVQQCLSVYNQRKSELINSTIAQMRDATIFANGVLASLNLPAAVEDVSGDSIPQSILNKSKTVIEQGGIQTIGQLIRDLPELLQRNKEILEESLKFLDEEEATDNDLKAKFKDRWQRTPSTELYKPLRSEGSNFRNVLDKAIGADAVVKERYQSHREAIVILCKPEAELNAAIPSANPAKTMQGSEVVTVLKSLLNKLDDMKKEREQLENDIKSVNFDMTTKFLTALAQDGAVNEEAISVTELDQIYGSYTYKVQENLKKQEDLLNNIQSAHQEFSKMKQSNSEANLREEVLKNLAVGHDNYIELVANLKEGTKFYNDLTDILLKFQCKCSDIVFARKTERDELLKDIQQSIAREPSAPSIPQVPSYQSAPSSISTNIATSSIPTPAPRTVFSAKQPPPRPPPPAMPSASPVPASAAQASNPAPTAAADSSQPPSNTIPSQAQGPPYPSYPGYPGYYGMPMPVGYNPYMYGQQTIPPYMYQPPSGQPPYPAQQPSFSYPQQPFFPPQ.

A BRO1 domain is found at Thr3 to Ala391. 2 disordered regions span residues Arg714–Ser809 and Ile835–Gln867. The segment covering Ser729–Pro744 has biased composition (low complexity). The segment covering Gln756–Met766 has biased composition (pro residues). The segment covering Pro767–Ser791 has biased composition (low complexity). Residues Gln792–Gln803 are compositionally biased toward polar residues. The segment covering Gln852 to Gln861 has biased composition (low complexity).

Post-translationally, phosphorylated on tyrosine residues.

The protein resides in the cytoplasm. It is found in the cytosol. The protein localises to the melanosome. It localises to the cytoskeleton. Its subcellular location is the microtubule organizing center. The protein resides in the centrosome. It is found in the secreted. The protein localises to the extracellular exosome. It localises to the cell junction. Its subcellular location is the tight junction. The protein resides in the midbody. It is found in the midbody ring. Functionally, multifunctional protein that may be involved in endocytosis, multivesicular body biogenesis, membrane repair, cytokinesis, apoptosis and maintenance of tight junction integrity. Class E VPS protein involved in concentration and sorting of cargo proteins of the multivesicular body (MVB) for incorporation into intralumenal vesicles that are generated by invagination and scission from the limiting membrane of the endosome. Binds to the phospholipid lysobisphosphatidic acid (LBPA) which is abundant in MVBs internal membranes. May play a role in the regulation of both apoptosis and cell proliferation. Regulates exosome biogenesis in concert with SDC1/4 and SDCBP. Ensures the proper assembly and positioning of actomyosin-tight junction complex at the apical sides of adjacent epithelial cells that defines a spatial membrane domain essential for the maintenance of epithelial cell polarity and barrier. This chain is Programmed cell death 6-interacting protein (pdcd6ip), found in Xenopus laevis (African clawed frog).